Consider the following 365-residue polypeptide: Glutamate 5-kinase 1 (365 aa).

Lysine 9 is a binding site for ATP. Residues serine 49, aspartate 136, and asparagine 148 each coordinate substrate. Residues 168 to 169 (TD) and 210 to 216 (TGGMKSK) each bind ATP. A PUA domain is found at 276–353 (SGKITVDEGA…DEFHHEEGIE (78 aa)).

This sequence belongs to the glutamate 5-kinase family.

It localises to the cytoplasm. The catalysed reaction is L-glutamate + ATP = L-glutamyl 5-phosphate + ADP. Its pathway is amino-acid biosynthesis; L-proline biosynthesis; L-glutamate 5-semialdehyde from L-glutamate: step 1/2. Its function is as follows. Catalyzes the transfer of a phosphate group to glutamate to form L-glutamate 5-phosphate. The protein is Glutamate 5-kinase 1 of Bacillus licheniformis (strain ATCC 14580 / DSM 13 / JCM 2505 / CCUG 7422 / NBRC 12200 / NCIMB 9375 / NCTC 10341 / NRRL NRS-1264 / Gibson 46).